The following is an 891-amino-acid chain: Alanine--tRNA ligase (891 aa).

The Zn(2+) site is built by His564, His568, Cys677, and His681.

This sequence belongs to the class-II aminoacyl-tRNA synthetase family. Zn(2+) serves as cofactor.

The protein resides in the cytoplasm. The catalysed reaction is tRNA(Ala) + L-alanine + ATP = L-alanyl-tRNA(Ala) + AMP + diphosphate. Functionally, catalyzes the attachment of alanine to tRNA(Ala) in a two-step reaction: alanine is first activated by ATP to form Ala-AMP and then transferred to the acceptor end of tRNA(Ala). Also edits incorrectly charged Ser-tRNA(Ala) and Gly-tRNA(Ala) via its editing domain. This chain is Alanine--tRNA ligase, found in Rhodopseudomonas palustris (strain BisA53).